The following is a 398-amino-acid chain: Phosphopentomutase (398 aa).

Residues Asp13, Asp290, His295, Asp331, His332, and His343 each coordinate Mn(2+).

This sequence belongs to the phosphopentomutase family. The cofactor is Mn(2+).

The protein localises to the cytoplasm. It carries out the reaction 2-deoxy-alpha-D-ribose 1-phosphate = 2-deoxy-D-ribose 5-phosphate. The enzyme catalyses alpha-D-ribose 1-phosphate = D-ribose 5-phosphate. The protein operates within carbohydrate degradation; 2-deoxy-D-ribose 1-phosphate degradation; D-glyceraldehyde 3-phosphate and acetaldehyde from 2-deoxy-alpha-D-ribose 1-phosphate: step 1/2. In terms of biological role, isomerase that catalyzes the conversion of deoxy-ribose 1-phosphate (dRib-1-P) and ribose 1-phosphate (Rib-1-P) to deoxy-ribose 5-phosphate (dRib-5-P) and ribose 5-phosphate (Rib-5-P), respectively. This Clostridium tetani (strain Massachusetts / E88) protein is Phosphopentomutase.